The primary structure comprises 214 residues: uncharacterized protein (214 aa).

A run of 4 helical transmembrane segments spans residues 10-30, 55-75, 147-167, and 174-194; these read IPPL…SLGI, IGVG…GYAI, VSGA…AGMA, and RFSW…AILL.

It belongs to the DedA family.

It is found in the cell membrane. This is an uncharacterized protein from Mycobacterium leprae (strain TN).